Consider the following 213-residue polypeptide: Large ribosomal subunit protein uL3 (213 aa).

Belongs to the universal ribosomal protein uL3 family. As to quaternary structure, part of the 50S ribosomal subunit. Forms a cluster with proteins L14 and L19.

Functionally, one of the primary rRNA binding proteins, it binds directly near the 3'-end of the 23S rRNA, where it nucleates assembly of the 50S subunit. The polypeptide is Large ribosomal subunit protein uL3 (Bifidobacterium longum subsp. infantis (strain ATCC 15697 / DSM 20088 / JCM 1222 / NCTC 11817 / S12)).